The primary structure comprises 399 residues: 4-hydroxy-3-methylbut-2-enyl diphosphate reductase (399 aa).

Cysteine 66 provides a ligand contact to [4Fe-4S] cluster. Histidine 96 serves as a coordination point for (2E)-4-hydroxy-3-methylbut-2-enyl diphosphate. Position 96 (histidine 96) interacts with dimethylallyl diphosphate. Isopentenyl diphosphate is bound at residue histidine 96. Cysteine 157 is a [4Fe-4S] cluster binding site. Histidine 185 contributes to the (2E)-4-hydroxy-3-methylbut-2-enyl diphosphate binding site. Histidine 185 is a binding site for dimethylallyl diphosphate. An isopentenyl diphosphate-binding site is contributed by histidine 185. Residue glutamate 187 is the Proton donor of the active site. Residue threonine 250 coordinates (2E)-4-hydroxy-3-methylbut-2-enyl diphosphate. Cysteine 288 is a binding site for [4Fe-4S] cluster. The (2E)-4-hydroxy-3-methylbut-2-enyl diphosphate site is built by serine 317, serine 318, asparagine 319, and serine 380. Residues serine 317, serine 318, asparagine 319, and serine 380 each coordinate dimethylallyl diphosphate. Positions 317, 318, 319, and 380 each coordinate isopentenyl diphosphate.

Belongs to the IspH family. [4Fe-4S] cluster serves as cofactor.

It catalyses the reaction isopentenyl diphosphate + 2 oxidized [2Fe-2S]-[ferredoxin] + H2O = (2E)-4-hydroxy-3-methylbut-2-enyl diphosphate + 2 reduced [2Fe-2S]-[ferredoxin] + 2 H(+). The enzyme catalyses dimethylallyl diphosphate + 2 oxidized [2Fe-2S]-[ferredoxin] + H2O = (2E)-4-hydroxy-3-methylbut-2-enyl diphosphate + 2 reduced [2Fe-2S]-[ferredoxin] + 2 H(+). It participates in isoprenoid biosynthesis; dimethylallyl diphosphate biosynthesis; dimethylallyl diphosphate from (2E)-4-hydroxy-3-methylbutenyl diphosphate: step 1/1. Its pathway is isoprenoid biosynthesis; isopentenyl diphosphate biosynthesis via DXP pathway; isopentenyl diphosphate from 1-deoxy-D-xylulose 5-phosphate: step 6/6. Functionally, catalyzes the conversion of 1-hydroxy-2-methyl-2-(E)-butenyl 4-diphosphate (HMBPP) into a mixture of isopentenyl diphosphate (IPP) and dimethylallyl diphosphate (DMAPP). Acts in the terminal step of the DOXP/MEP pathway for isoprenoid precursor biosynthesis. This Synechococcus sp. (strain CC9902) protein is 4-hydroxy-3-methylbut-2-enyl diphosphate reductase.